A 291-amino-acid polypeptide reads, in one-letter code: Tyramine--L-glutamate ligase (291 aa).

Residues 104 to 274 enclose the ATP-grasp domain; that stretch reads KYPVKNLGCS…LAELLIKNAN (171 aa). 131–176 provides a ligand contact to ATP; that stretch reads KDYVKTPKTFKPKKYVIKKIDGCGGKFNLFDENFLIQEFVEGESLS. Mg(2+) is bound by residues Asp236, Glu247, and Asn249. Mn(2+) is bound by residues Asp236, Glu247, and Asn249.

The cofactor is Mg(2+). Requires Mn(2+) as cofactor.

The enzyme catalyses tyramine + L-glutamate + ATP = gamma-L-glutamyltyramine + ADP + phosphate + H(+). It functions in the pathway cofactor biosynthesis; methanofuran biosynthesis. Catalyzes the formation of an amide bond between tyramine and the gamma carboxy group of L-glutamate. The enzyme also accepts phenylethylamine in vitro. The sequence is that of Tyramine--L-glutamate ligase from Methanocaldococcus fervens (strain DSM 4213 / JCM 15782 / AG86) (Methanococcus fervens).